Consider the following 284-residue polypeptide: MKDSHQTIGVFVRPTHYQNPLFEKLERAKEWVLKLLEDEGFESFMIDGLDGAKDERLIEKAYAFLCLGGDGTILGALRMTHSYNKPCFGVRIGNLGFLSAVELNGLKGFLQDLKQDKIKLEEHLALEGRIGKTSFYAINEIVIAKKKALGVLDIQAYVGHTPFNTYKGDGLIIATPLGSTAYNLSAHGPIVHALSQSYILTPLCDFSLTQRPLVLGAEFCLNFCAHEDALVVIDGQATYDLKANQPLYIQKSPTTTKLLQKNSRDYFKVLKEKLLWGESPSKKR.

D70 acts as the Proton acceptor in catalysis. Residues 70 to 71, 139 to 140, K167, D169, L177, 180 to 185, and Q236 each bind NAD(+); these read DG, NE, and TAYNLS.

Belongs to the NAD kinase family. The cofactor is a divalent metal cation.

The protein localises to the cytoplasm. It carries out the reaction NAD(+) + ATP = ADP + NADP(+) + H(+). In terms of biological role, involved in the regulation of the intracellular balance of NAD and NADP, and is a key enzyme in the biosynthesis of NADP. Catalyzes specifically the phosphorylation on 2'-hydroxyl of the adenosine moiety of NAD to yield NADP. The chain is NAD kinase from Helicobacter pylori (strain Shi470).